The following is a 563-amino-acid chain: Pyruvate decarboxylase isozyme 1 (563 aa).

An N-acetylserine modification is found at Ser-2. Residues Asp-28, His-115, and Tyr-157 each coordinate pyruvate. Arg-161 bears the Omega-N-methylarginine mark. Residue Lys-212 forms a Glycyl lysine isopeptide (Lys-Gly) (interchain with G-Cter in ubiquitin) linkage. Ser-223 carries the post-translational modification Phosphoserine. Position 224 (Arg-224) interacts with pyruvate. Residue Lys-233 forms a Glycyl lysine isopeptide (Lys-Gly) (interchain with G-Cter in ubiquitin) linkage. Phosphothreonine is present on Thr-266. Residues Lys-269 and Lys-332 each participate in a glycyl lysine isopeptide (Lys-Gly) (interchain with G-Cter in ubiquitin) cross-link. Residues Thr-336 and Thr-353 each carry the phosphothreonine modification. Thiamine diphosphate is bound by residues Thr-390 and 413–415 (GSI). Asp-444 is a Mg(2+) binding site. Thiamine diphosphate is bound by residues 445-446 (GS) and 471-476 (NDGYTI). Positions 471 and 473 each coordinate Mg(2+). Glu-477 provides a ligand contact to pyruvate. Residues Lys-484, Lys-505, and Lys-520 each participate in a glycyl lysine isopeptide (Lys-Gly) (interchain with G-Cter in ubiquitin) cross-link. Thr-522 is subject to Phosphothreonine. Ser-526 bears the Phosphoserine mark.

This sequence belongs to the TPP enzyme family. Homotetramer. It depends on Mg(2+) as a cofactor. Requires thiamine diphosphate as cofactor. In terms of processing, cleavage of N-terminal methionine and N-terminal acetylation by NAT1/ARD1.

The protein resides in the cytoplasm. The protein localises to the nucleus. The catalysed reaction is pyruvate + H(+) = acetaldehyde + CO2. It carries out the reaction 3-methyl-2-oxobutanoate + H(+) = 2-methylpropanal + CO2. The enzyme catalyses (S)-3-methyl-2-oxopentanoate + H(+) = 2-methylbutanal + CO2. It catalyses the reaction indole-3-pyruvate + H(+) = indole-3-acetaldehyde + CO2. The catalysed reaction is 3-phenylpyruvate + H(+) = 2-phenylacetaldehyde + CO2. It carries out the reaction 2-oxobutanoate + H(+) = propanal + CO2. The enzyme catalyses 2-oxopentanoate + H(+) = butanal + CO2. It catalyses the reaction 2 acetaldehyde = acetoin. The catalysed reaction is acetaldehyde + pyruvate + H(+) = acetoin + CO2. The protein operates within fermentation; ethanol fermentation. Its pathway is amino-acid degradation; Ehrlich pathway. With respect to regulation, allosterically activated by its substrate, pyruvate. Functionally, major of three pyruvate decarboxylases (PDC1, PDC5, PDC6) implicated in the nonoxidative conversion of pyruvate to acetaldehyde and carbon dioxide during alcoholic fermentation. Most of the produced acetaldehyde is subsequently reduced to ethanol, but some is required for cytosolic acetyl-CoA production for biosynthetic pathways. The enzyme is also one of five 2-oxo acid decarboxylases (PDC1, PDC5, PDC6, ARO10, and THI3) able to decarboxylate more complex 2-oxo acids (alpha-ketoacids) than pyruvate, which seem mainly involved in amino acid catabolism. Here the enzyme catalyzes the decarboxylation of amino acids, which, in a first step, have been transaminated to the corresponding 2-oxo acids. In a third step, the resulting aldehydes are reduced to alcohols, collectively referred to as fusel oils or alcohols. Its preferred substrates are the transaminated amino acids derived from threonine (2-oxobutanoate), norvaline (2-oxopentanoate), valine (3-methyl-2-oxobutanoate, also alpha-keto-isovalerate), isoleucine ((3S)-3-methyl-2-oxopentanoate, also alpha-keto-beta-methylvalerate), phenylalanine (phenylpyruvate), and tryptophan (3-(indol-3-yl)pyruvate), whereas transaminated leucine is no substrate. In a side-reaction the carbanionic intermediate (or active aldehyde) generated by decarboxylation or by activation of an aldehyde can react with an aldehyde via condensation (or carboligation) yielding a 2-hydroxy ketone, collectively called acyloins. In Saccharomyces cerevisiae (strain ATCC 204508 / S288c) (Baker's yeast), this protein is Pyruvate decarboxylase isozyme 1.